A 156-amino-acid polypeptide reads, in one-letter code: Ribosomal RNA large subunit methyltransferase H (156 aa).

S-adenosyl-L-methionine contacts are provided by residues Leu73, Gly104, and 123-128 (IGPLTL).

Belongs to the RNA methyltransferase RlmH family. Homodimer.

The protein resides in the cytoplasm. The enzyme catalyses pseudouridine(1915) in 23S rRNA + S-adenosyl-L-methionine = N(3)-methylpseudouridine(1915) in 23S rRNA + S-adenosyl-L-homocysteine + H(+). Its function is as follows. Specifically methylates the pseudouridine at position 1915 (m3Psi1915) in 23S rRNA. The polypeptide is Ribosomal RNA large subunit methyltransferase H (Stenotrophomonas maltophilia (strain K279a)).